A 418-amino-acid polypeptide reads, in one-letter code: Gamma-glutamyl phosphate reductase (418 aa).

It belongs to the gamma-glutamyl phosphate reductase family.

It localises to the cytoplasm. The enzyme catalyses L-glutamate 5-semialdehyde + phosphate + NADP(+) = L-glutamyl 5-phosphate + NADPH + H(+). It functions in the pathway amino-acid biosynthesis; L-proline biosynthesis; L-glutamate 5-semialdehyde from L-glutamate: step 2/2. In terms of biological role, catalyzes the NADPH-dependent reduction of L-glutamate 5-phosphate into L-glutamate 5-semialdehyde and phosphate. The product spontaneously undergoes cyclization to form 1-pyrroline-5-carboxylate. This chain is Gamma-glutamyl phosphate reductase, found in Photobacterium profundum (strain SS9).